The primary structure comprises 589 residues: Phenylalanine--tRNA ligase beta subunit (589 aa).

Positions 290-368 constitute a B5 domain; that stretch reads LNPTCFKADI…IAYGYDNLKH (79 aa). D346, D352, E355, and D356 together coordinate Mg(2+).

The protein belongs to the phenylalanyl-tRNA synthetase beta subunit family. Type 2 subfamily. Tetramer of two alpha and two beta subunits. It depends on Mg(2+) as a cofactor.

It is found in the cytoplasm. The protein resides in the nucleus. The catalysed reaction is tRNA(Phe) + L-phenylalanine + ATP = L-phenylalanyl-tRNA(Phe) + AMP + diphosphate + H(+). The sequence is that of Phenylalanine--tRNA ligase beta subunit (frs1) from Schizosaccharomyces pombe (strain 972 / ATCC 24843) (Fission yeast).